We begin with the raw amino-acid sequence, 1092 residues long: Probable arabinosyltransferase A (1092 aa).

The next 13 helical transmembrane spans lie at 21–43 (IARLIAVVAGIAGVLLCGLVPLL), 214–233 (AVMVLGLACVIGSIVALALL), 249–271 (GLWTWITDTGVIGGLLIWHIVGA), 324–346 (VWMRLPATAAAIATWLIISRCVL), 353–372 (VAANRVAMLTAGATFLAAWL), 382–399 (PLIAFAVITVWMLVENSI), 404–426 (LWPAAVAIVIAMFSVTLAPQGLI), 517–534 (FAVLVLLLCLFGLIMVLL), 541–563 (GAVSGPLWRLCGSTAIGLLLLIL), 568–590 (WAIQFGAFAGLAGALGGVTAFAF), 602–624 (ALYVTALLFILAWATSGLNGWFY), 639–661 (IAHYPVTTIFLVLAIVGGLLAGW), and 682–704 (ALASTPLLIVATIMVVLELGSMV). The disordered stretch occupies residues 772 to 798 (PSGVSEHLEPEPVGTNPGTPNSEGPVD).

This sequence belongs to the emb family.

Its subcellular location is the cell membrane. Functionally, arabinosyl transferase responsible for the polymerization of arabinose into the arabinan of arabinogalactan. The sequence is that of Probable arabinosyltransferase A (embA) from Mycolicibacterium smegmatis (Mycobacterium smegmatis).